Reading from the N-terminus, the 208-residue chain is Small ribosomal subunit protein uS5 (208 aa).

The S5 DRBM domain occupies 28 to 91 (LEERLIYANR…EKAKKNVIRV (64 aa)).

Belongs to the universal ribosomal protein uS5 family. As to quaternary structure, part of the 30S ribosomal subunit. Contacts proteins S4 and S8.

With S4 and S12 plays an important role in translational accuracy. Its function is as follows. Located at the back of the 30S subunit body where it stabilizes the conformation of the head with respect to the body. The protein is Small ribosomal subunit protein uS5 of Aquifex aeolicus (strain VF5).